The primary structure comprises 283 residues: Vitamin K epoxide reductase homolog (283 aa).

At 1–20 the chain is on the cytoplasmic side; the sequence is MASYLKLKAQEETWLQRHSR. Residues 21 to 41 traverse the membrane as a helical segment; it reads LILAILAGLGSLLTAYLTYTK. Residues 42 to 66 lie on the Periplasmic side of the membrane; it reads LTEQPAAFCTGDGGCDLVLSSRWAE. A disulfide bridge connects residues Cys50 and Cys56. 59–65 provides a ligand contact to a quinone; sequence VLSSRWA. The helical transmembrane segment at 67–87 threads the bilayer; it reads FLGIPTAAVGLLGFLGVLALA. The Cytoplasmic portion of the chain corresponds to 88 to 102; the sequence is VLPDGLPLVKRWRWP. The helical transmembrane segment at 103–123 threads the bilayer; that stretch reads ALFGLVSAMTAFEMYMLYLMV. Residue 111-122 coordinates a quinone; it reads MTAFEMYMLYLM. Over 124–128 the chain is Periplasmic; sequence AVLRQ. The helical transmembrane segment at 129-149 threads the bilayer; sequence FCMYCTTAIILVAGLGLVTVL. Cys130 and Cys133 form a disulfide bridge. The Cytoplasmic portion of the chain corresponds to 150–158; sequence GHRWLDGGK. Residues 159–179 traverse the membrane as a helical segment; it reads LAFSYILVAFLTLVTTIGVYA. Over 180–283 the chain is Periplasmic; the sequence is NQVPPPSPLA…ASGYPLEEGR (104 aa). The segment at 186–283 is thioredoxin-like domain; it reads SPLAVGLAAH…ASGYPLEEGR (98 aa). Cystine bridges form between Cys209-Cys212 and Cys231-Cys244.

The protein belongs to the VKOR family.

The protein resides in the membrane. With respect to regulation, inhibited by ferulenol. Functionally, thiol-disulfide oxidoreductase that catalyzes vitamin K-dependent disulfide bond formation in periplasmic target proteins. The protein is Vitamin K epoxide reductase homolog of Synechococcus sp. (strain JA-2-3B'a(2-13)) (Cyanobacteria bacterium Yellowstone B-Prime).